A 195-amino-acid polypeptide reads, in one-letter code: GRF1-interacting factor 2 (195 aa).

The interval 166–195 (QQPETGLGGNVGLRGGKQDGADGQGKDDGK) is disordered. Residues 171-180 (GLGGNVGLRG) are compositionally biased toward gly residues. Positions 181 to 195 (GKQDGADGQGKDDGK) are enriched in basic and acidic residues.

Belongs to the SS18 family. As to quaternary structure, interacts with GRF1. In terms of tissue distribution, predominantly expressed in shoot tips containing the shoot apical meristem (SAM) and flower buds. Also expressed in mature flowers.

Transcription coactivator that plays a role in the regulation of cell expansion in leaf and cotyledons tissues. Component of a network formed by miR396, the GRFs and their interacting factors (GIFs) acting in the regulation of meristem function, at least partially through the control of cell proliferation. GIFs are involved in the positive regulation of cell proliferation of lateral organs in a functionally redundant manner. The polypeptide is GRF1-interacting factor 2 (GIF2) (Arabidopsis thaliana (Mouse-ear cress)).